The sequence spans 121 residues: UPF0102 protein HRM2_30940 (121 aa).

It belongs to the UPF0102 family.

This Desulforapulum autotrophicum (strain ATCC 43914 / DSM 3382 / VKM B-1955 / HRM2) (Desulfobacterium autotrophicum) protein is UPF0102 protein HRM2_30940.